The chain runs to 963 residues: Spliceosome associated factor 3, U4/U6 recycling protein (963 aa).

Over residues 1–11 (MATAAATSASE) the composition is skewed to low complexity. Disordered stretches follow at residues 1 to 36 (MATA…RTRR) and 49 to 86 (KTMG…YEWE). Position 2 is an N-acetylalanine (Ala-2). The mediates interaction with PRPF3 stretch occupies residues 2 to 351 (ATAAATSASE…LVPDLWIRYS (350 aa)). Phosphoserine is present on residues Ser-10 and Ser-16. Residues 14 to 23 (AESKAGPKAD) are compositionally biased toward basic and acidic residues. Residues 21 to 46 (KADGEEDEVKAARTRRKVLSRAVAAA) are a coiled coil. The segment covering 57–69 (QQEEGVSESDGDE) has biased composition (acidic residues). A coiled-coil region spans residues 82 to 110 (EYEWEYDEEEEKNQLEIERLEEQLSINVY). 8 HAT repeats span residues 126–158 (GELT…DEIS), 164–195 (LDRE…YSVG), 201–237 (GGLE…FESA), 242–275 (ARLE…WSED), 324–356 (GDPA…YLDR), 359–391 (KVKD…AMER), 394–430 (VDHQ…YLRR), and 487–520 (NNMQ…LERA). Position 215 is a phosphoserine (Ser-215). Positions 487 to 520 (NNMQKARELWDSIMTRGNAKYANMWLEYYNLERA) are required for interaction with USP4. The necessary and sufficient for U6 snRNA binding stretch occupies residues 537–953 (CTSDYPEHVC…AATEAPKMSN (417 aa)). Residues 559–619 (LEDWDIAVQK…ALKKKKKIRG (61 aa)) are a coiled coil. The tract at residues 600–670 (QRKRARAEKK…EVAPGPAGKC (71 aa)) is required for nuclear localization. The Nuclear localization signal motif lies at 601–608 (RKRARAEK). The span at 608–619 (KKALKKKKKIRG) shows a compositional bias: basic and acidic residues. The disordered stretch occupies residues 608-712 (KKALKKKKKI…SITVFVSNLP (105 aa)). Residues 620-635 (PEKRGADEDDEKEWGD) are compositionally biased toward basic residues. The segment covering 644 to 657 (RRRVENSIPAAGET) has biased composition (acidic residues). The residue at position 650 (Ser-650) is a Phosphoserine. Position 657 is a phosphothreonine (Thr-657). Over residues 695–712 (VLHDSSKDSITVFVSNLP) the composition is skewed to basic and acidic residues. An RRM 1 domain is found at 704-782 (ITVFVSNLPY…RPMFVSPCVD (79 aa)). Residues Ser-769, Ser-795, and Ser-852 each carry the phosphoserine modification. One can recognise an RRM 2 domain in the interval 801–878 (HKLFISGLPF…NVIKVAISNP (78 aa)). Positions 900–909 (PQTYGARGKG) are enriched in basic and acidic residues. Arg-906 carries the omega-N-methylarginine modification.

Component of the 7SK snRNP complex at least composed of P-TEFb (composed of CDK9 and CCNT1/cyclin-T1), HEXIM1, HEXIM2, BCDIN3, SART3 proteins and 7SK and U6 snRNAs. Interacts with AGO1 and AGO2. Interacts with PRPF3 and USP4; the interaction with PRPF3 is direct and recruits USP4 to its substrate PRPF3. Interacts with USP15; the interaction is direct.

The protein localises to the nucleus. It is found in the nucleoplasm. It localises to the cajal body. Its subcellular location is the nucleus speckle. The protein resides in the cytoplasm. U6 snRNP-binding protein that functions as a recycling factor of the splicing machinery. Promotes the initial reassembly of U4 and U6 snRNPs following their ejection from the spliceosome during its maturation. Also binds U6atac snRNPs and may function as a recycling factor for U4atac/U6atac spliceosomal snRNP, an initial step in the assembly of U12-type spliceosomal complex. The U12-type spliceosomal complex plays a role in the splicing of introns with non-canonical splice sites. May also function as a substrate-targeting factor for deubiquitinases like USP4 and USP15. Recruits USP4 to ubiquitinated PRPF3 within the U4/U5/U6 tri-snRNP complex, promoting PRPF3 deubiquitination and thereby regulating the spliceosome U4/U5/U6 tri-snRNP spliceosomal complex disassembly. May also recruit the deubiquitinase USP15 to histone H2B and mediate histone deubiquitination, thereby regulating gene expression and/or DNA repair. May play a role in hematopoiesis probably through transcription regulation of specific genes including MYC. This chain is Spliceosome associated factor 3, U4/U6 recycling protein, found in Pongo abelii (Sumatran orangutan).